A 421-amino-acid polypeptide reads, in one-letter code: 4-hydroxy-3-methylbut-2-en-1-yl diphosphate synthase (flavodoxin) (421 aa).

[4Fe-4S] cluster is bound by residues Cys-311, Cys-314, Cys-357, and Glu-364.

This sequence belongs to the IspG family. It depends on [4Fe-4S] cluster as a cofactor.

It catalyses the reaction (2E)-4-hydroxy-3-methylbut-2-enyl diphosphate + oxidized [flavodoxin] + H2O + 2 H(+) = 2-C-methyl-D-erythritol 2,4-cyclic diphosphate + reduced [flavodoxin]. It participates in isoprenoid biosynthesis; isopentenyl diphosphate biosynthesis via DXP pathway; isopentenyl diphosphate from 1-deoxy-D-xylulose 5-phosphate: step 5/6. Converts 2C-methyl-D-erythritol 2,4-cyclodiphosphate (ME-2,4cPP) into 1-hydroxy-2-methyl-2-(E)-butenyl 4-diphosphate. The sequence is that of 4-hydroxy-3-methylbut-2-en-1-yl diphosphate synthase (flavodoxin) from Xanthomonas oryzae pv. oryzae (strain MAFF 311018).